Here is a 614-residue protein sequence, read N- to C-terminus: Numb-like protein (614 aa).

5 disordered regions span residues 1–68 (MSRS…QWQA), 223–283 (GSFR…PVAA), 371–420 (FASA…LEEV), 448–468 (QQQQ…LQPF), and 539–614 (LGKA…EIEL). Residues 74–223 (RKGTCSFPVR…ASRTSFAREG (150 aa)) enclose the PID domain. Phosphoserine is present on residues Ser224 and Ser228. The span at 233–245 (PAEREAGDKKKAE) shows a compositional bias: basic and acidic residues. A compositionally biased stretch (low complexity) spans 246–260 (AAAAPAVAPGPAQPG). Ser263 is modified (phosphoserine). Residue Thr279 is modified to Phosphothreonine. A compositionally biased stretch (low complexity) spans 371–390 (FASAGAPVPGPPSATTGTSA). Residues 409 to 418 (TPSEAERWLE) show a composition bias toward basic and acidic residues. Ser411 is subject to Phosphoserine. The segment covering 563 to 578 (NGAPWPPEPAPAPAPE) has biased composition (pro residues).

In terms of assembly, associates with EPS15 and NOTCH1. Interacts (via PTB domain) with MAP3K7IP2 (via C-terminal). Interacts (via C-terminal) with TRAF6 (via TRAF domains).

The protein localises to the cytoplasm. Its function is as follows. Plays a role in the process of neurogenesis. Required throughout embryonic neurogenesis to maintain neural progenitor cells, also called radial glial cells (RGCs), by allowing their daughter cells to choose progenitor over neuronal cell fate. Not required for the proliferation of neural progenitor cells before the onset of embryonic neurogenesis. Also required postnatally in the subventricular zone (SVZ) neurogenesis by regulating SVZ neuroblasts survival and ependymal wall integrity. Negative regulator of NF-kappa-B signaling pathway. The inhibition of NF-kappa-B activation is mediated at least in part, by preventing MAP3K7IP2 to interact with polyubiquitin chains of TRAF6 and RIPK1 and by stimulating the 'Lys-48'-linked polyubiquitination and degradation of TRAF6 in cortical neurons. The chain is Numb-like protein (Numbl) from Rattus norvegicus (Rat).